The primary structure comprises 1530 residues: Multidrug resistance-associated protein 1 (1530 aa).

Over 1–33 (MALRDFCSVDGSDLFWEWNVTWNTSNPDFTKCF) the chain is Extracellular. An N-linked (GlcNAc...) asparagine glycan is attached at asparagine 19. The chain crosses the membrane as a helical span at residues 34–54 (QNTVLVWVPCSYLWVCFPFYF). Over 55 to 74 (LYLSHHDRGYIQMTHLNKAK) the chain is Cytoplasmic. The helical transmembrane segment at 75–95 (TALGFLLWIVCWADLFYSFWE) threads the bilayer. Over 96–100 (RSMGK) the chain is Extracellular. A helical transmembrane segment spans residues 101–121 (LLAPVFLVSPTLLGITMLLAT). Over 122–133 (FLIQIERRRGVQ) the chain is Cytoplasmic. The chain crosses the membrane as a helical span at residues 134–154 (SSGIMLTFWLIALLCALAILR). Residues 155 to 172 (SKIMTALKEDARVDVFRD) are Extracellular-facing. Residues 173 to 193 (VTFYIYFSLVLIQLVLSCFSD) form a helical membrane-spanning segment. Topologically, residues 194 to 316 (RSPLFSETIN…KERDPSLFKV (123 aa)) are cytoplasmic. The residue at position 277 (tyrosine 277) is a Phosphotyrosine. Position 289 is a phosphoserine (serine 289). Residues 317–337 (LYKTFGPYFLMSFLFKAVHDL) traverse the membrane as a helical segment. An ABC transmembrane type-1 1 domain is found at 325 to 608 (FLMSFLFKAV…LPMVISSIVQ (284 aa)). Over 338–363 (MMFAGPEILKLLINFVNDKKAPEWQG) the chain is Extracellular. Residues 364-384 (YFYTALLFISACLQTLVLHQY) traverse the membrane as a helical segment. At 385 to 440 (FHICFVSGMRIKTAVIGAVYRKALVITNAARKSSTVGEIVNLMSVDAQRFMDLATY) the chain is on the cytoplasmic side. A helical membrane pass occupies residues 441–461 (INMIWSAPLQVILALYLLWLN). Residues 462-464 (LGP) lie on the Extracellular side of the membrane. A helical transmembrane segment spans residues 465 to 485 (SVLAGVAVMVLMVPLNAVMAM). The Cytoplasmic segment spans residues 486-547 (KTKTYQVAHM…VLKKSAYLAA (62 aa)). Lysine 503 carries the N6-succinyllysine modification. Residues 548 to 568 (VGTFTWVCTPFLVALSTFAVY) form a helical membrane-spanning segment. Residues 569-590 (VTVDENNILDAQKAFVSLALFN) lie on the Extracellular side of the membrane. A helical membrane pass occupies residues 591–611 (ILRFPLNILPMVISSIVQASV). Topologically, residues 612–966 (SLKRLRVFLS…VKLSVYWDYM (355 aa)) are cytoplasmic. The region spanning 644 to 868 (ITVKNATFTW…DGAFAEFLRT (225 aa)) is the ABC transporter 1 domain. 678-685 (GQVGCGKS) contacts ATP. A disordered region spans residues 912–939 (RQLSSSSSYSRDVSQHHTSTAELRKPGP). Serine 915 and serine 930 each carry phosphoserine. Residues 967–987 (KAIGLFISFLSIFLFLCNHVA) traverse the membrane as a helical segment. The 282-residue stretch at 974–1255 (SFLSIFLFLC…LVRMSSEMET (282 aa)) folds into the ABC transmembrane type-1 2 domain. Over 988–1024 (SLVSNYWLSLWTDDPIVNGTQEHTQVRLSVYGALGIS) the chain is Extracellular. An N-linked (GlcNAc...) asparagine glycan is attached at asparagine 1005. A helical membrane pass occupies residues 1025 to 1045 (QGITVFGYSMAVSIGGIFASR). Residues 1046-1088 (RLHLDLLHNVLRSPISFFERTPSGNLVNRFSKELDTVDSMIPQ) lie on the Cytoplasmic side of the membrane. The chain crosses the membrane as a helical span at residues 1089-1109 (VIKMFMGSLFNVIGACIIILL). Alanine 1110 is a topological domain (extracellular). The chain crosses the membrane as a helical span at residues 1111–1131 (TPMAAVIIPPLGLIYFFVQRF). Over 1132–1202 (YVASSRQLKR…VANRWLAVRL (71 aa)) the chain is Cytoplasmic. The helical transmembrane segment at 1203-1223 (ECVGNCIVLFASLFAVISRHS) threads the bilayer. The Extracellular portion of the chain corresponds to 1224–1225 (LS). A helical membrane pass occupies residues 1226-1246 (AGLVGLSVSYSLQVTTYLNWL). Over 1247 to 1530 (VRMSSEMETN…YSMAKDSGLV (284 aa)) the chain is Cytoplasmic. One can recognise an ABC transporter 2 domain in the interval 1292 to 1526 (VEFRDYGLRY…RGLFYSMAKD (235 aa)). 1326-1333 (GRTGAGKS) lines the ATP pocket.

Belongs to the ABC transporter superfamily. ABCC family. Conjugate transporter (TC 3.A.1.208) subfamily. As to expression, expressed in heart, spleen, lung, kidney, skeletal muscle, mammary gland and weaker in brain and liver.

It is found in the cell membrane. Its subcellular location is the basolateral cell membrane. It carries out the reaction ATP + H2O + xenobioticSide 1 = ADP + phosphate + xenobioticSide 2.. It catalyses the reaction an S-substituted glutathione(in) + ATP + H2O = an S-substituted glutathione(out) + ADP + phosphate + H(+). The enzyme catalyses sphing-4-enine 1-phosphate(in) + ATP + H2O = sphing-4-enine 1-phosphate(out) + ADP + phosphate + H(+). The catalysed reaction is leukotriene C4(in) + ATP + H2O = leukotriene C4(out) + ADP + phosphate + H(+). It carries out the reaction 17beta-estradiol 17-O-(beta-D-glucuronate)(in) + ATP + H2O = 17beta-estradiol 17-O-(beta-D-glucuronate)(out) + ADP + phosphate + H(+). It catalyses the reaction daunorubicin(in) + ATP + H2O = daunorubicin(out) + ADP + phosphate + H(+). The enzyme catalyses vincristine(in) + ATP + H2O = vincristine(out) + ADP + phosphate + H(+). The catalysed reaction is 2',3'-cGAMP(in) + ATP + H2O = 2',3'-cGAMP(out) + ADP + phosphate + H(+). It carries out the reaction S-[(2E,6E,10E)-geranylgeranyl]-L-glutathione(in) + ATP + H2O = S-[(2E,6E,10E)-geranylgeranyl]-L-glutathione(out) + ADP + phosphate + H(+). It catalyses the reaction prostaglandin A2-S-(R)-glutathione(in) + ATP + H2O = prostaglandin A2-S-(R)-glutathione(out) + ADP + phosphate + H(+). The enzyme catalyses prostaglandin A2-S-(S)-glutathione(in) + ATP + H2O = prostaglandin A2-S-(S)-glutathione(out) + ADP + phosphate + H(+). Its activity is regulated as follows. MK 571 inhibits sphingosine 1-phosphate and leukotriene C4 export. In terms of biological role, mediates export of organic anions and drugs from the cytoplasm. Mediates ATP-dependent transport of glutathione and glutathione conjugates, leukotriene C4, estradiol-17-beta-o-glucuronide, methotrexate, antiviral drugs and other xenobiotics. Confers resistance to anticancer drugs by decreasing accumulation of drug in cells, and by mediating ATP- and GSH-dependent drug export. Hydrolyzes ATP with low efficiency. Catalyzes the export of sphingosine 1-phosphate from mast cells independently of their degranulation. Participates in inflammatory response by allowing export of leukotriene C4 from leukotriene C4-synthesizing cells. Mediates ATP-dependent, GSH-independent cyclic GMP-AMP (cGAMP) export. Thus, by limiting intracellular cGAMP concentrations negatively regulates the cGAS-STING pathway. Exports S-geranylgeranyl-glutathione (GGG) in lymphoid cells and stromal compartments of lymphoid organs. ABCC1 (via extracellular transport) with GGT5 (via GGG catabolism) establish GGG gradients within lymphoid tissues to position P2RY8-positive lymphocytes at germinal centers in lymphoid follicles and restrict their chemotactic transmigration from blood vessels to the bone marrow parenchyma. Mediates basolateral export of GSH-conjugated R- and S-prostaglandin A2 diastereomers in polarized epithelial cells. The sequence is that of Multidrug resistance-associated protein 1 from Bos taurus (Bovine).